We begin with the raw amino-acid sequence, 358 residues long: Polyadenylate-binding protein-interacting protein 11 (358 aa).

The span at 1-19 shows a compositional bias: low complexity; the sequence is MAVVETGAAATAADAGGVV. Residues 1–45 are disordered; that stretch reads MAVVETGAAATAADAGGVVIQPPPSSPPSSMTSQDSGVSSDDQNH. A compositionally biased stretch (polar residues) spans 31 to 41; sequence MTSQDSGVSSD. Residues 92–102 carry the PAM2-like motif; sequence KLNPMAEEFVP. The segment at 136–164 is disordered; sequence GGYGNENGGFRRKKSFGQGKRRMNARTSM. Positions 145–159 are enriched in basic residues; the sequence is FRRKKSFGQGKRRMN. The Bipartite nuclear localization signal signature appears at 146 to 157; the sequence is RRKKSFGQGKRR. 2 RRM domains span residues 173–248 and 270–346; these read RTVY…PSKT and RTIY…PSKT.

As to expression, expressed in cauline leaves, stems, immature siliques and primary inflorescences.

It localises to the nucleus. The polypeptide is Polyadenylate-binding protein-interacting protein 11 (CID11) (Arabidopsis thaliana (Mouse-ear cress)).